Here is an 852-residue protein sequence, read N- to C-terminus: Homeobox-leucine zipper protein ATHB-14 (852 aa).

A disordered region spans residues 1 to 25; that stretch reads MMMVHSMSRDMMNRESPDKGLDSGK. Residues 7–22 show a composition bias toward basic and acidic residues; sequence MSRDMMNRESPDKGLD. The segment at residues 22 to 85 is a DNA-binding region (homeobox); that stretch reads DSGKYVRYTP…NRRCREKQRK (64 aa). A coiled-coil region spans residues 80 to 122; the sequence is REKQRKEAARLQTVNRKLNAMNKLLMEENDRLQKQVSNLVYEN. Residues 80–130 form a ZIP domain region; the sequence is REKQRKEAARLQTVNRKLNAMNKLLMEENDRLQKQVSNLVYENGHMKHQLH. Polar residues predominate over residues 130–148; sequence HTASGTTTDNSCESVVVSG. Positions 130–166 are disordered; sequence HTASGTTTDNSCESVVVSGQQHQQQNPNPQHQQRDAN. The span at 149–160 shows a compositional bias: low complexity; the sequence is QQHQQQNPNPQH. One can recognise an START domain in the interval 164–392; the sequence is DANNPAGLLS…IAQETSGEVQ (229 aa).

This sequence belongs to the HD-ZIP homeobox family. Class III subfamily. As to quaternary structure, homodimer. Heterodimer with ZPR3. Interacts with ESR1 and ESR2. Interacts with ZPR3. As to expression, expressed in the center of the meristem and on the adaxial side of the leaves.

The protein localises to the nucleus. With respect to regulation, inhibited by ZPR3. Probable transcription factor involved in the determination of adaxial-abaxial polarity in ovule primordium. Specifies adaxial leaf fates. This Arabidopsis thaliana (Mouse-ear cress) protein is Homeobox-leucine zipper protein ATHB-14 (ATHB-14).